We begin with the raw amino-acid sequence, 513 residues long: ATP synthase subunit alpha (513 aa).

169-176 contributes to the ATP binding site; the sequence is GDRQTGKS.

It belongs to the ATPase alpha/beta chains family. As to quaternary structure, F-type ATPases have 2 components, CF(1) - the catalytic core - and CF(0) - the membrane proton channel. CF(1) has five subunits: alpha(3), beta(3), gamma(1), delta(1), epsilon(1). CF(0) has three main subunits: a(1), b(2) and c(9-12). The alpha and beta chains form an alternating ring which encloses part of the gamma chain. CF(1) is attached to CF(0) by a central stalk formed by the gamma and epsilon chains, while a peripheral stalk is formed by the delta and b chains.

The protein localises to the cell inner membrane. It carries out the reaction ATP + H2O + 4 H(+)(in) = ADP + phosphate + 5 H(+)(out). In terms of biological role, produces ATP from ADP in the presence of a proton gradient across the membrane. The alpha chain is a regulatory subunit. The protein is ATP synthase subunit alpha of Sodalis glossinidius (strain morsitans).